The sequence spans 469 residues: MSLLPYAWAKAQRALLRPGEHGATLLVSPRTPGWAISEVRQRHAPASLESVRDDELDTLLASAYSDTGSAAAVVGAAESEVDLDRLMDDIPEVTDLLDTQDGAPVIRMINALLTQAARDEASDIHIEPFETHSVVRYRVDGALRDVVAPRKALHAALVSRIKIMAQLDIAEKRLPQDGRIALRVAGRPIDIRVSTVPTGHGERVVMRLLDKQAGRLRLETLGMAPGVLAPLDNLIRQPHGIVLVTGPTGSGKTTTLYAALARLDASTSNILTVEDPVEYDLPGISQIQVNARIDMTFAVALRAILRQDPDIIMIGEIRDLETAQIAVQASLTGHLVLATLHTNDAVSAVTRLVDMGVEPFLLASSMLGVLAQRLVRRLCTHCRVEEDGGWRAVGCPACNQTGYSGRTGIHELFVIDDEIRRLVHQGRAEQDLREAARAAGMRSMREDGERWIASGSTTLEEILRVTRDA.

246–253 (GPTGSGKT) serves as a coordination point for ATP.

Belongs to the GSP E family.

The protein resides in the cytoplasm. It carries out the reaction ATP + H2O + cellular proteinSide 1 = ADP + phosphate + cellular proteinSide 2.. ATPase component of the type II secretion system required for the energy-dependent secretion of extracellular factors from the periplasm. Acts as a molecular motor to provide the energy that is required for the export of proteins. The Hxc system is involved in the secretion of low-molecular-weight alkaline phosphatase L-AP (LapA). Is probably also involved in the secretion of the phosphate-binding protein PstS. This is Type II secretion system protein HxcR from Pseudomonas aeruginosa (strain ATCC 15692 / DSM 22644 / CIP 104116 / JCM 14847 / LMG 12228 / 1C / PRS 101 / PAO1).